The following is a 562-amino-acid chain: Arginine--tRNA ligase (562 aa).

Residues 122–132 (PNIAKPISMGH) carry the 'HIGH' region motif.

It belongs to the class-I aminoacyl-tRNA synthetase family. In terms of assembly, monomer.

The protein localises to the cytoplasm. The enzyme catalyses tRNA(Arg) + L-arginine + ATP = L-arginyl-tRNA(Arg) + AMP + diphosphate. In Pediococcus pentosaceus (strain ATCC 25745 / CCUG 21536 / LMG 10740 / 183-1w), this protein is Arginine--tRNA ligase.